Consider the following 932-residue polypeptide: Glycine dehydrogenase (decarboxylating) (932 aa).

Residue K685 is modified to N6-(pyridoxal phosphate)lysine.

This sequence belongs to the GcvP family. The glycine cleavage system is composed of four proteins: P, T, L and H. Requires pyridoxal 5'-phosphate as cofactor.

The catalysed reaction is N(6)-[(R)-lipoyl]-L-lysyl-[glycine-cleavage complex H protein] + glycine + H(+) = N(6)-[(R)-S(8)-aminomethyldihydrolipoyl]-L-lysyl-[glycine-cleavage complex H protein] + CO2. The glycine cleavage system catalyzes the degradation of glycine. The P protein binds the alpha-amino group of glycine through its pyridoxal phosphate cofactor; CO(2) is released and the remaining methylamine moiety is then transferred to the lipoamide cofactor of the H protein. This Brucella melitensis biotype 2 (strain ATCC 23457) protein is Glycine dehydrogenase (decarboxylating).